A 281-amino-acid chain; its full sequence is Predicted GPI-anchored protein 39 (281 aa).

An N-terminal signal peptide occupies residues 1-18 (MKATTFTLLLSIATAINA). Disordered stretches follow at residues 52-94 (HHHG…SASV) and 106-227 (VSVS…SSSE). Low complexity-rich tracts occupy residues 69–94 (SSSSVSESTVEELSTTTTTESVSASV), 106–158 (VSVS…STTD), 167–203 (ATDSVETTFESVSNTEDLSSSSSSIITDSSESTIEET), and 210–227 (SVPSSLSEEYSTSGSSSE). The N-linked (GlcNAc...) asparagine glycan is linked to N150. N-linked (GlcNAc...) asparagine glycans are attached at residues N239, N246, N249, and N252. Residue S256 is the site of GPI-anchor amidated serine attachment. The propeptide at 257 to 281 (ANFAIQYGTDYGVAVVAAIVGALLI) is removed in mature form.

The protein resides in the cell membrane. This chain is Predicted GPI-anchored protein 39 (PGA39), found in Candida albicans (strain SC5314 / ATCC MYA-2876) (Yeast).